Reading from the N-terminus, the 246-residue chain is 14-3-3 protein beta/alpha (246 aa).

Met1 bears the N-acetylmethionine mark. An N-acetylthreonine; in 14-3-3 protein beta/alpha, N-terminally processed modification is found at Thr2. A Phosphothreonine modification is found at Thr2. Residue Lys5 is modified to N6-acetyllysine. Lys51 carries the N6-acetyllysine; alternate modification. A Glycyl lysine isopeptide (Lys-Gly) (interchain with G-Cter in SUMO2); alternate cross-link involves residue Lys51. Residue Ser60 is modified to Phosphoserine. Residue Lys70 is modified to N6-acetyllysine. 3'-nitrotyrosine occurs at positions 84 and 106. At Lys117 the chain carries N6-acetyllysine. Phosphoserine occurs at positions 186 and 232.

The protein belongs to the 14-3-3 family. In terms of assembly, homodimer. Interacts with SAMSN1 and PRKCE. Interacts with AKAP13. Interacts with SSH1 and TORC2/CRTC2. Interacts with ABL1; the interaction results in cytoplasmic location of ABL1 and inhibition of cABL-mediated apoptosis. Interacts with ROR2 (dimer); the interaction results in phosphorylation of YWHAB on tyrosine residues. Interacts with GAB2. Interacts with YAP1 (phosphorylated form). Interacts with the phosphorylated (by AKT1) form of SRPK2. Interacts with PKA-phosphorylated AANAT. Interacts with MYO1C. Interacts with SIRT2. Interacts with the 'Thr-369' phosphorylated form of DAPK2. Interacts with PI4KB, TBC1D22A and TBC1D22B. Interacts with the 'Ser-1134' and 'Ser-1161' phosphorylated form of SOS1. Interacts (via phosphorylated form) with YWHAB; this interaction occurs in a protein kinase AKT1-dependent manner. Interacts with SLITRK1. Interacts with SYNPO2 (phosphorylated form); YWHAB competes with ACTN2 for interaction with SYNPO2. Interacts with RIPOR2 (via phosphorylated form); this interaction occurs in a chemokine-dependent manner and does not compete for binding of RIPOR2 with RHOA nor blocks inhibition of RIPOR2-mediated RHOA activity. Interacts with MARK2 and MARK3. Interacts with TESK1; the interaction is dependent on the phosphorylation of TESK1 'Ser-439' and inhibits TESK1 kinase activity. Interacts with MEFV. Interacts with HDAC4. Interacts with ADAM22 (via C-terminus). The alpha, brain-specific form differs from the beta form in being phosphorylated. Phosphorylated on Ser-60 by protein kinase C delta type catalytic subunit in a sphingosine-dependent fashion. In terms of processing, isoform Short contains a N-acetylmethionine at position 1.

The protein localises to the cytoplasm. It is found in the melanosome. Functionally, adapter protein implicated in the regulation of a large spectrum of both general and specialized signaling pathways. Binds to a large number of partners, usually by recognition of a phosphoserine or phosphothreonine motif. Binding generally results in the modulation of the activity of the binding partner. Negative regulator of osteogenesis. Blocks the nuclear translocation of the phosphorylated form (by AKT1) of SRPK2 and antagonizes its stimulatory effect on cyclin D1 expression resulting in blockage of neuronal apoptosis elicited by SRPK2. Negative regulator of signaling cascades that mediate activation of MAP kinases via AKAP13. In Rattus norvegicus (Rat), this protein is 14-3-3 protein beta/alpha (Ywhab).